The chain runs to 362 residues: 2-aminoethylphosphonate--pyruvate transaminase (362 aa).

An N6-(pyridoxal phosphate)lysine modification is found at K193.

This sequence belongs to the class-V pyridoxal-phosphate-dependent aminotransferase family. PhnW subfamily. Homodimer. Requires pyridoxal 5'-phosphate as cofactor.

It catalyses the reaction (2-aminoethyl)phosphonate + pyruvate = phosphonoacetaldehyde + L-alanine. In terms of biological role, involved in phosphonate degradation. This is 2-aminoethylphosphonate--pyruvate transaminase from Bacteroides fragilis (strain ATCC 25285 / DSM 2151 / CCUG 4856 / JCM 11019 / LMG 10263 / NCTC 9343 / Onslow / VPI 2553 / EN-2).